We begin with the raw amino-acid sequence, 154 residues long: Troponin C, isoform 1 (154 aa).

EF-hand domains lie at 8-43 (EQTA…LGHQ), 44-79 (LDDA…FLVE), 84-119 (AMMA…LDDK), and 120-154 (LTND…GGDD). Ca(2+) contacts are provided by Asp-57, Asp-59, Ser-61, Gln-63, and Glu-68. Asp-133, Asp-135, Ser-137, Thr-139, and Glu-144 together coordinate Ca(2+).

This sequence belongs to the troponin C family. As to expression, present only in adult muscles.

This is Troponin C, isoform 1 (TpnC41C) from Drosophila melanogaster (Fruit fly).